We begin with the raw amino-acid sequence, 207 residues long: Small ribosomal subunit protein uS4 (207 aa).

The tract at residues 31 to 51 (KCKLDSKPGQHGRTSGARTSD) is disordered. The S4 RNA-binding domain occupies 97 to 160 (SRLDNVVYRM…KKQARIRESL (64 aa)).

This sequence belongs to the universal ribosomal protein uS4 family. In terms of assembly, part of the 30S ribosomal subunit. Contacts protein S5. The interaction surface between S4 and S5 is involved in control of translational fidelity.

Its function is as follows. One of the primary rRNA binding proteins, it binds directly to 16S rRNA where it nucleates assembly of the body of the 30S subunit. With S5 and S12 plays an important role in translational accuracy. In Bordetella avium (strain 197N), this protein is Small ribosomal subunit protein uS4.